The primary structure comprises 232 residues: 2,3,4,5-tetrahydropyridine-2,6-dicarboxylate N-acetyltransferase (232 aa).

It belongs to the transferase hexapeptide repeat family. DapH subfamily.

It carries out the reaction (S)-2,3,4,5-tetrahydrodipicolinate + acetyl-CoA + H2O = L-2-acetamido-6-oxoheptanedioate + CoA. It participates in amino-acid biosynthesis; L-lysine biosynthesis via DAP pathway; LL-2,6-diaminopimelate from (S)-tetrahydrodipicolinate (acetylase route): step 1/3. Its function is as follows. Catalyzes the transfer of an acetyl group from acetyl-CoA to tetrahydrodipicolinate. The chain is 2,3,4,5-tetrahydropyridine-2,6-dicarboxylate N-acetyltransferase from Streptococcus thermophilus (strain CNRZ 1066).